The chain runs to 226 residues: MATELPYDLTPELAPLSWLIGSWEGQGRLGDGSADTEIFYQRVDFTELGLPFVEYRAESWLCEADGTLLRPLTVESGFWQVDRERRDGDVGPGMRPADIVPAFRSAEDVERLRAGDEGFGLTATIAHPGSLSELYYGRIKGPQLQLATEAILRGSAAGPYHRATRMAGLVNGQLFWRWDVADAAGAELEAHASAILDRMPSAAEGRLAPGAERPRGAGGRKQGEQS.

Positions 21–27 (GSWEGQG) match the GXWXGXG motif. His191 lines the heme b pocket. The segment at 201–226 (SAAEGRLAPGAERPRGAGGRKQGEQS) is disordered.

This sequence belongs to the nitrobindin family. In terms of assembly, homodimer. The cofactor is heme b.

It carries out the reaction peroxynitrite = nitrate. It participates in nitrogen metabolism. Heme-binding protein able to scavenge peroxynitrite and to protect free L-tyrosine against peroxynitrite-mediated nitration, by acting as a peroxynitrite isomerase that converts peroxynitrite to nitrate. Therefore, this protein likely plays a role in peroxynitrite sensing and in the detoxification of reactive nitrogen and oxygen species (RNS and ROS, respectively). Is able to bind nitric oxide (NO) in vitro, but may act as a sensor of peroxynitrite levels in vivo. This is Peroxynitrite isomerase from Micrococcus luteus (strain ATCC 4698 / DSM 20030 / JCM 1464 / CCM 169 / CCUG 5858 / IAM 1056 / NBRC 3333 / NCIMB 9278 / NCTC 2665 / VKM Ac-2230) (Micrococcus lysodeikticus).